We begin with the raw amino-acid sequence, 106 residues long: Thioredoxin (106 aa).

N6-acetyllysine is present on lysine 3. One can recognise a Thioredoxin domain in the interval 3 to 106; the sequence is KQIESKTAFQ…KLEATINELV (104 aa). Residue lysine 8 is modified to N6-succinyllysine. Active-site nucleophile residues include cysteine 32 and cysteine 35. A disulfide bridge connects residues cysteine 32 and cysteine 35. Lysine 39 carries the N6-acetyllysine modification. An S-nitrosocysteine mark is found at cysteine 62 and cysteine 69. Cysteine 73 is subject to S-nitrosocysteine; alternate. Lysine 95 carries the N6-acetyllysine; alternate modification. Residue lysine 95 is modified to N6-succinyllysine; alternate.

This sequence belongs to the thioredoxin family. As to quaternary structure, homodimer; disulfide-linked. Interacts with TXNIP through the redox-active site. Interacts with MAP3K5 and CASP3. Interacts with APEX1; the interaction stimulates the FOS/JUN AP-1 DNA-binding activity in a redox-dependent manner. In terms of processing, in the fully reduced protein, both Cys-69 and Cys-73 are nitrosylated in response to nitric oxide (NO). When two disulfide bonds are present in the protein, only Cys-73 is nitrosylated. Cys-73 can serve as donor for nitrosylation of target proteins.

It is found in the nucleus. Its subcellular location is the cytoplasm. The protein resides in the secreted. Functionally, participates in various redox reactions through the reversible oxidation of its active center dithiol to a disulfide and catalyzes dithiol-disulfide exchange reactions. Plays a role in the reversible S-nitrosylation of cysteine residues in target proteins, and thereby contributes to the response to intracellular nitric oxide. Nitrosylates the active site Cys of CASP3 in response to nitric oxide (NO), and thereby inhibits caspase-3 activity. Induces the FOS/JUN AP-1 DNA binding activity in ionizing radiation (IR) cells through its oxidation/reduction status and stimulates AP-1 transcriptional activity. The chain is Thioredoxin (TXN) from Pongo abelii (Sumatran orangutan).